The primary structure comprises 311 residues: VQ motif-containing protein 9 (311 aa).

Residues 1 to 27 are compositionally biased toward low complexity; that stretch reads MDKSCNSSGDSSAVSASATSSTGNNTT. A disordered region spans residues 1 to 78; sequence MDKSCNSSGD…QINQGNLHQH (78 aa). A VQ motif is present at residues 90–99; it reads FRDVVQKLTG. Disordered regions lie at residues 103-125, 228-266, and 290-311; these read HERI…SSRL, QQEN…PPLF, and GQLG…YKGH. Pro residues predominate over residues 240-249; that stretch reads FPPPHPPPPS. The segment covering 290-302 has biased composition (low complexity); sequence GQLGFPVSPTTVP.

As to quaternary structure, interacts (via N-terminus) with WRKY8. In terms of tissue distribution, highly expressed in roots and at lower levels in rosette leaves, cauline leaves, stems, flowers and siliques.

The protein resides in the nucleus. In terms of biological role, functions as a negative regulator of salt stress response. Functions as a repressor of WRKY8 transcription factor by decreasing the DNA-binding activity of WRKY8 and acts antagonistically with WRKY8 to regulate sodium and potassium homeostasis under salt stress. The polypeptide is VQ motif-containing protein 9 (Arabidopsis thaliana (Mouse-ear cress)).